A 1374-amino-acid polypeptide reads, in one-letter code: Y' element ATP-dependent helicase YLL066C (1374 aa).

The interval A321 to K345 is disordered. One can recognise a Helicase ATP-binding domain in the interval E375 to A552. Residue A388–T395 coordinates ATP. Residues D498–H501 carry the DEAH box motif. Residues K609–G758 enclose the Helicase C-terminal domain. A compositionally biased stretch (low complexity) spans A832–S975. The disordered stretch occupies residues A832 to K999. Basic and acidic residues predominate over residues A976–K999.

This sequence belongs to the helicase family. Yeast subtelomeric Y' repeat subfamily.

Catalyzes DNA unwinding and is involved in telomerase-independent telomere maintenance. This is Y' element ATP-dependent helicase YLL066C from Saccharomyces cerevisiae (strain ATCC 204508 / S288c) (Baker's yeast).